The sequence spans 611 residues: Glutathione hydrolase proenzyme 2 (611 aa).

Residues Met1 to Arg42 are Cytoplasmic-facing. The chain crosses the membrane as a helical; Signal-anchor for type II membrane protein span at residues Phe43–Ser63. The Lumenal portion of the chain corresponds to Ser64–Tyr611. The N-linked (GlcNAc...) asparagine glycan is linked to Asn138. Position 147 (Arg147) interacts with L-glutamate. N-linked (GlcNAc...) asparagine glycans are attached at residues Asn153, Asn297, and Asn396. The active-site Nucleophile is Thr420. L-glutamate contacts are provided by residues Thr438, Asn440, Gln459, Asp462, Ser490–Ser491, and Gly512–Gly513.

This sequence belongs to the gamma-glutamyltransferase family. As to quaternary structure, heterodimer composed of the light and heavy chains. The active site is located in the light chain. In terms of processing, cleaved by autocatalysis into a large and a small subunit.

The protein resides in the vacuole membrane. It catalyses the reaction an N-terminal (5-L-glutamyl)-[peptide] + an alpha-amino acid = 5-L-glutamyl amino acid + an N-terminal L-alpha-aminoacyl-[peptide]. It carries out the reaction glutathione + H2O = L-cysteinylglycine + L-glutamate. The enzyme catalyses an S-substituted glutathione + H2O = an S-substituted L-cysteinylglycine + L-glutamate. It participates in sulfur metabolism; glutathione metabolism. In terms of biological role, catalyzes the transfer of the gamma-glutamyl moiety of glutathione (GSH) and other gamma-glutamyl compounds to amino acids and peptides. Major GSH-degrading enzyme, catalyzing the hydrolytic release of L-glutamate from GSH. Plays a role in the turnover of the vacuolar GSH, serving as an alternative nitrogen source during nitrogen starvation. In Schizosaccharomyces pombe (strain 972 / ATCC 24843) (Fission yeast), this protein is Glutathione hydrolase proenzyme 2 (ggt2).